Consider the following 170-residue polypeptide: CASP-like protein 1F1 (170 aa).

Over 1 to 16 (MMGDNEGRRTPLLNLG) the chain is Cytoplasmic. A helical transmembrane segment spans residues 17-37 (VQVSMRVLTIGAAMASMWVMI). Residues 38–62 (TNREVASVYGIAFEAKYSYSSAFRY) lie on the Extracellular side of the membrane. The chain crosses the membrane as a helical span at residues 63 to 83 (LVYAQIAVCAATLFTLVWACL). Topologically, residues 84 to 88 (AVRRR) are cytoplasmic. A helical transmembrane segment spans residues 89-109 (GLVFALFFFDLLTTLTAISAF). At 110 to 141 (SAAFAEGYVGKYGNKQAGWLPICGYVHGYCSR) the chain is on the extracellular side. Residues 142 to 162 (VTISLAMSFASFILLFILTVL) traverse the membrane as a helical segment. Topologically, residues 163–170 (TASAARHY) are cytoplasmic.

Belongs to the Casparian strip membrane proteins (CASP) family. In terms of assembly, homodimer and heterodimers. As to expression, in flowers, expressed in the anther wall.

Its subcellular location is the cell membrane. This Arabidopsis thaliana (Mouse-ear cress) protein is CASP-like protein 1F1.